The sequence spans 594 residues: Probable ABC transporter-binding protein DR_1571 (594 aa).

Residues 1 to 18 form the signal peptide; sequence MKKVMMLALALGASTSLA.

Belongs to the bacterial solute-binding protein 5 family.

In terms of biological role, probably part of a binding-protein-dependent transport system. The chain is Probable ABC transporter-binding protein DR_1571 from Deinococcus radiodurans (strain ATCC 13939 / DSM 20539 / JCM 16871 / CCUG 27074 / LMG 4051 / NBRC 15346 / NCIMB 9279 / VKM B-1422 / R1).